We begin with the raw amino-acid sequence, 4363 residues long: AM-toxin synthetase AMT1 (4363 aa).

Positions 278–670 are adenylation 1; that stretch reads AGQAKQRPHA…GSLLYVGRKD (393 aa). The Carrier 1 domain maps to 810–887; that stretch reads APDSVIARQL…ALAAIAKVIP (78 aa). S847 is subject to O-(pantetheine 4'-phosphoryl)serine. The tract at residues 926–1340 is condensation 1; sequence EDVYACTPLQ…TLGQIDVLTS (415 aa). An adenylation 2 region spans residues 1368–1765; sequence KQARTRPGAI…LGRKDTQIKI (398 aa). Positions 1884-1961 constitute a Carrier 2 domain; sequence PPVTDMEKHV…DQARHVTLLT (78 aa). Residue S1922 is modified to O-(pantetheine 4'-phosphoryl)serine. Positions 1999–2410 are condensation 2; that stretch reads EDVYPCTPLQ…ASPSSSTLVS (412 aa). An adenylation 3 region spans residues 2448–2853; the sequence is RKKALAAPQA…GRKDNQVKIR (406 aa). In terms of domain architecture, Carrier 3 spans 2977-3053; it reads LPSTVMEETL…DLAACCTDRR (77 aa). S3014 is subject to O-(pantetheine 4'-phosphoryl)serine. Residues 3098-3503 are condensation 3; sequence VEDVYPCTPM…ELVSSIETLN (406 aa). The 77-residue stretch at 3730–3806 folds into the Carrier 4 domain; it reads PAVTAMQLAI…SLAVRATENT (77 aa). An O-(pantetheine 4'-phosphoryl)serine modification is found at S3767. Residues 3850–4204 are condensation 4; that stretch reads QDVLPCTSMQ…GLDEIVEHYA (355 aa).

Belongs to the NRP synthetase family.

It functions in the pathway mycotoxin biosynthesis. Nonribosomal peptide synthetase; part of the gene clusters that mediate the biosynthesis of AM-toxins, host-selective toxins (HSTs) causing Alternaria blotch on apple, a worldwide distributed disease. AM-toxins are cyclic depsipeptides containing the 3 residues 2-hydroxy-isovaleric acid (2-HIV), dehydroalanine, L-alanine which are common for all 3 AM-toxins I to III. The fourth precursor is L-alpha-amino-methoxyphenyl-valeric acid (L-Amv) for AM-toxin I, L-alpha-amino-phenyl-valeric acid (L-Apv) for AM-toxin II, and L-alpha-amino-hydroxyphenyl-valeric acid (L-Ahv) for AM-toxin III. AM-toxins have two target sites for affecting susceptible apple cells; they cause invagination of the plasma membrane and electrolyte loss, and chloroplast disorganization. The non-ribosomal peptide synthetase AMT1 contains 4 catalytic modules and is responsible for activation of each residue in AM-toxin. The aldo-keto reductase AMT2 catalyzes the conversion of 2-keto-isovaleric acid (2-KIV) to 2-hydroxy-isovaleric acid (2-HIV), one of the precursor residues incorporated by AMT1 during AM-toxin biosynthesis, by reduction of its ketone to an alcohol. The cytochrome P450 monooxygenase AMT3 and the thioesterase AMT4 are also important for AM-toxin production, but their exact function within the AM-toxin biosynthesis are not known yet. Up to 21 proteins (including AMT1 to AMT4) are predicted to be involved in AM-toxin biosynthesis since their expression ishighly up-regulated in AM-toxin-producing cultures. The protein is AM-toxin synthetase AMT1 of Alternaria alternata (Alternaria rot fungus).